A 101-amino-acid chain; its full sequence is MKKTLLHYLIFSCLLALVLVGFVYASSPIDKKQYMTVTVASGDTLWGLAKQYEPAHGLSPDEFIRWVVDVNRLPSSRLTAGEQIVIPVLKSKQDGSLAVKR.

In terms of domain architecture, LysM spans 35-86 (MTVTVASGDTLWGLAKQYEPAHGLSPDEFIRWVVDVNRLPSSRLTAGEQIVI).

This sequence belongs to the YneA family.

The protein resides in the cytoplasm. Its function is as follows. Inhibits cell division during the SOS response. Affects a later stage of the cell division protein assembly, after the assembly of the Z ring, by probably suppressing recruitment of FtsL and/or DivIC to the division machinery. The polypeptide is Cell division suppressor protein YneA (Geobacillus thermodenitrificans (strain NG80-2)).